An 878-amino-acid chain; its full sequence is Valine--tRNA ligase (878 aa).

A 'HIGH' region motif is present at residues 45–55; sequence PNVTGQLHMGH. The 'KMSKS' region motif lies at 524-528; sequence KMSKS. Lysine 527 lines the ATP pocket. Residues 804-871 are a coiled coil; the sequence is PLKDLIDLEK…REKEVLEQRI (68 aa).

The protein belongs to the class-I aminoacyl-tRNA synthetase family. ValS type 1 subfamily. Monomer.

It is found in the cytoplasm. The enzyme catalyses tRNA(Val) + L-valine + ATP = L-valyl-tRNA(Val) + AMP + diphosphate. Catalyzes the attachment of valine to tRNA(Val). As ValRS can inadvertently accommodate and process structurally similar amino acids such as threonine, to avoid such errors, it has a 'posttransfer' editing activity that hydrolyzes mischarged Thr-tRNA(Val) in a tRNA-dependent manner. The protein is Valine--tRNA ligase of Carboxydothermus hydrogenoformans (strain ATCC BAA-161 / DSM 6008 / Z-2901).